A 1446-amino-acid chain; its full sequence is Receptor-type tyrosine-protein phosphatase U (1446 aa).

An N-terminal signal peptide occupies residues 1 to 18; that stretch reads MARAQALVLALTFQFCAP. Residues 19–749 are Extracellular-facing; that stretch reads ETETPAAGCT…QRSEEMGLIL (731 aa). Residues 25 to 188 enclose the MAM domain; the sequence is AGCTFEEASD…ILLFSYPCAK (164 aa). N75 carries an N-linked (GlcNAc...) asparagine glycan. The 86-residue stretch at 190-275 folds into the Ig-like C2-type domain; the sequence is PHFSRLGDVE…SQAPRGAGVS (86 aa). C210 and C264 form a disulfide bridge. 4 consecutive Fibronectin type-III domains span residues 288–383, 386–484, 485–591, and 592–668; these read PIAP…CAEP, APKG…TDED, VPGG…SAPS, and FDYA…FGAE. N410 carries an N-linked (GlcNAc...) asparagine glycan. Residue N685 is glycosylated (N-linked (GlcNAc...) asparagine). A helical transmembrane segment spans residues 750-770; it reads GICAGGLAVLILLLGAIIVII. Residues 771-887 are mediates interaction with CTNNB1; it reads RKGRDRYAYS…DLLQHINQMK (117 aa). Residues 771-1446 lie on the Cytoplasmic side of the membrane; it reads RKGRDRYAYS…LEYLEALELR (676 aa). Residues 830 to 867 are disordered; that stretch reads PGYSPRGDQRSGGVTEASSLLGGSPRRPCGRKGSPYHT. Phosphoserine occurs at positions 848, 853, and 863. Y865 carries the phosphotyrosine modification. Tyrosine-protein phosphatase domains follow at residues 888–1144 and 1176–1439; these read TAEG…ILEA and LREE…ALEY. Residues E1053, 1085 to 1091, and Q1129 contribute to the substrate site; that span reads CSAGTGR. C1085 functions as the Phosphocysteine intermediate in the catalytic mechanism. C1380 acts as the Phosphocysteine intermediate in catalysis.

This sequence belongs to the protein-tyrosine phosphatase family. Receptor class 2B subfamily. As to quaternary structure, forms homooligomeric complexes which mediate cell homotypic adhesion. Interacts (via the cytoplasmic juxtamembrane domain) with CTNNB1; may mediate interaction with the cadherin/catenin adhesion complex. Interacts with KIT. May interact with AP3B1. The extracellular domain is proteolytically processed through cleavage within the fibronectin type-III 4 domain. In addition to the 190 kDa full-length protein, proteolytic products of 100 kDa, 80 kDa and 73 kDa are observed. Post-translationally, N-glycosylated. In terms of processing, phosphorylated on tyrosine residues upon activation of KIT with stem cell factor (SCF). The 73 kDa proteolytic product is not phosphorylated. In terms of tissue distribution, transcripts of different sizes are differentially expressed in a subset of tissues. Detected in brain, lung, skeletal muscle, heart, kidney and placenta. In brain; expressed in olfactory bulb, cerebral cortex, hippocampus and cerebellum.

It localises to the cell junction. Its subcellular location is the cell membrane. It catalyses the reaction O-phospho-L-tyrosyl-[protein] + H2O = L-tyrosyl-[protein] + phosphate. Its function is as follows. Tyrosine-protein phosphatase which dephosphorylates CTNNB1. Regulates CTNNB1 function both in cell adhesion and signaling. May function in cell proliferation and migration and play a role in the maintenance of epithelial integrity. May play a role in megakaryocytopoiesis. The protein is Receptor-type tyrosine-protein phosphatase U (Ptpru) of Mus musculus (Mouse).